The sequence spans 304 residues: Oxygen-dependent coproporphyrinogen-III oxidase (304 aa).

Position 93 (S93) interacts with substrate. The a divalent metal cation site is built by H97 and H107. H107 functions as the Proton donor in the catalytic mechanism. 109 to 111 (NVR) is a binding site for substrate. A divalent metal cation is bound by residues H146 and H176. Positions 241 to 276 (YVEFNLVYDRGTLFGLQSGGRTESILMSLPPQVRWG) are important for dimerization. 259–261 (GGR) serves as a coordination point for substrate.

Belongs to the aerobic coproporphyrinogen-III oxidase family. Homodimer. The cofactor is a divalent metal cation.

It is found in the cytoplasm. It catalyses the reaction coproporphyrinogen III + O2 + 2 H(+) = protoporphyrinogen IX + 2 CO2 + 2 H2O. It functions in the pathway porphyrin-containing compound metabolism; protoporphyrin-IX biosynthesis; protoporphyrinogen-IX from coproporphyrinogen-III (O2 route): step 1/1. Functionally, involved in the heme biosynthesis. Catalyzes the aerobic oxidative decarboxylation of propionate groups of rings A and B of coproporphyrinogen-III to yield the vinyl groups in protoporphyrinogen-IX. The polypeptide is Oxygen-dependent coproporphyrinogen-III oxidase (Pseudomonas savastanoi pv. phaseolicola (strain 1448A / Race 6) (Pseudomonas syringae pv. phaseolicola (strain 1448A / Race 6))).